Here is a 168-residue protein sequence, read N- to C-terminus: Regulatory protein RecX (168 aa).

This sequence belongs to the RecX family.

The protein resides in the cytoplasm. In terms of biological role, modulates RecA activity. In Serratia proteamaculans (strain 568), this protein is Regulatory protein RecX.